The following is a 438-amino-acid chain: Nudix hydrolase 19, chloroplastic (438 aa).

The N-terminal 36 residues, 1–36 (MLALFLSSSSYPTLSFLSRSVTLNLARTTTLSALTM), are a transit peptide targeting the chloroplast. Zn(2+) contacts are provided by C212, C215, C230, and C235. Substrate is bound by residues Y240, 276–278 (AGF), E292, E296, and E342. A Nudix hydrolase domain is found at 241 to 371 (PRVDPVVIML…EYRKAQRTAA (131 aa)). The Mg(2+) site is built by A276, E292, E296, and E342. The Nudix box motif lies at 277–298 (GFIEPGESLEEAVRRETWEETG). The Microbody targeting signal motif lies at 422 to 424 (PDD).

This sequence belongs to the Nudix hydrolase family. NudC subfamily. Mg(2+) is required as a cofactor. It depends on Zn(2+) as a cofactor. In terms of tissue distribution, expressed in roots, leaves, stems and inflorescences.

It localises to the plastid. Its subcellular location is the chloroplast. The enzyme catalyses a 5'-end NAD(+)-phospho-ribonucleoside in mRNA + H2O = a 5'-end phospho-adenosine-phospho-ribonucleoside in mRNA + beta-nicotinamide D-ribonucleotide + 2 H(+). It carries out the reaction NAD(+) + H2O = beta-nicotinamide D-ribonucleotide + AMP + 2 H(+). The catalysed reaction is NADH + H2O = reduced beta-nicotinamide D-ribonucleotide + AMP + 2 H(+). Functionally, mRNA decapping enzyme that specifically removes the nicotinamide adenine dinucleotide (NAD) cap from a subset of mRNAs by hydrolyzing the diphosphate linkage to produce nicotinamide mononucleotide (NMN) and 5' monophosphate mRNA. The NAD-cap is present at the 5'-end of some RNAs; in contrast to the canonical N7 methylguanosine (m7G) cap, the NAD cap promotes mRNA decay. Mediates the hydrolysis of some nucleoside diphosphate derivatives. Has a high affinity for NADPH compared with that for NADH. This chain is Nudix hydrolase 19, chloroplastic (NUDT19), found in Arabidopsis thaliana (Mouse-ear cress).